Here is an 879-residue protein sequence, read N- to C-terminus: Alanine--tRNA ligase (879 aa).

The Zn(2+) site is built by H567, H571, C669, and H673.

The protein belongs to the class-II aminoacyl-tRNA synthetase family. Zn(2+) serves as cofactor.

The protein localises to the cytoplasm. It catalyses the reaction tRNA(Ala) + L-alanine + ATP = L-alanyl-tRNA(Ala) + AMP + diphosphate. Functionally, catalyzes the attachment of alanine to tRNA(Ala) in a two-step reaction: alanine is first activated by ATP to form Ala-AMP and then transferred to the acceptor end of tRNA(Ala). Also edits incorrectly charged Ser-tRNA(Ala) and Gly-tRNA(Ala) via its editing domain. This is Alanine--tRNA ligase from Lactobacillus acidophilus (strain ATCC 700396 / NCK56 / N2 / NCFM).